The sequence spans 379 residues: Probable pectin lyase B (379 aa).

The N-terminal stretch at 1 to 20 (MHYKLLFAAAAASLASAVSA) is a signal peptide. Cystine bridges form between Cys-83–Cys-102 and Cys-92–Cys-226. Residues Asn-129 and Asn-252 are each glycosylated (N-linked (GlcNAc...) asparagine). Arg-256 is an active-site residue. Cys-323 and Cys-331 are disulfide-bonded.

This sequence belongs to the polysaccharide lyase 1 family.

It is found in the secreted. The enzyme catalyses Eliminative cleavage of (1-&gt;4)-alpha-D-galacturonan methyl ester to give oligosaccharides with 4-deoxy-6-O-methyl-alpha-D-galact-4-enuronosyl groups at their non-reducing ends.. Its function is as follows. Pectinolytic enzymes consist of four classes of enzymes: pectin lyase, polygalacturonase, pectin methylesterase and rhamnogalacturonase. Among pectinolytic enzymes, pectin lyase is the most important in depolymerization of pectin, since it cleaves internal glycosidic bonds of highly methylated pectins. The sequence is that of Probable pectin lyase B (pelB) from Aspergillus niger (strain ATCC MYA-4892 / CBS 513.88 / FGSC A1513).